Consider the following 944-residue polypeptide: Serine/threonine-protein kinase PLK4 (944 aa).

The region spanning 12–265 is the Protein kinase domain; that stretch reads FKVLNLLGKG…LSSVLDHAFM (254 aa). ATP-binding positions include 18–26 and lysine 41; that span reads LGKGSFACV. Aspartate 136 (proton acceptor) is an active-site residue. Disordered regions lie at residues 327-396, 432-463, and 530-561; these read KDKH…YSER, RSLERHTSPPVKEKTPSEFMGPAKQTAPRSND, and LGIKKNPGTGQRKAEKSQFGEQSKSRVPQQAF. The span at 378-394 shows a compositional bias: polar residues; sequence RSGTSQSQTYAKPSSYS. Positions 432-447 are enriched in basic and acidic residues; sequence RSLERHTSPPVKEKTP. Positions 548–561 are enriched in polar residues; it reads FGEQSKSRVPQQAF. The Cryptic POLO box 1 (CPB1) domain occupies 565-678; that stretch reads TLRSIISPLN…AKFIKLVRSK (114 aa). Residues 679–791 enclose the Cryptic POLO box 2 (CPB2) domain; the sequence is TPKVTYYTRY…GRRPALAESP (113 aa). The tract at residues 786 to 809 is disordered; the sequence is ALAESPKTQPTPSVDSARERKEEQ. One can recognise a POLO box domain in the interval 862 to 940; that stretch reads QVLKSVFVEN…LSSILMLFAS (79 aa).

This sequence belongs to the protein kinase superfamily. Ser/Thr protein kinase family. CDC5/Polo subfamily. As to quaternary structure, homodimer. In terms of processing, ubiquitinated; leading to its degradation by the proteasome.

The protein localises to the cytoplasm. It localises to the cytoskeleton. Its subcellular location is the microtubule organizing center. The protein resides in the centrosome. It is found in the centriole. The enzyme catalyses L-seryl-[protein] + ATP = O-phospho-L-seryl-[protein] + ADP + H(+). It carries out the reaction L-threonyl-[protein] + ATP = O-phospho-L-threonyl-[protein] + ADP + H(+). In terms of biological role, serine/threonine-protein kinase that plays a central role in centriole duplication. Able to trigger procentriole formation on the surface of the parental centriole cylinder, leading to the recruitment of centriole biogenesis proteins such as sass6, cpap, ccp110, cep135 and gamma-tubulin. When overexpressed, it is able to induce centrosome amplification through the simultaneous generation of multiple procentrioles adjoining each parental centriole during S phase. Its central role in centriole replication suggests a possible role in tumorigenesis, centrosome aberrations being frequently observed in tumors. Also involved in deuterosome-mediated centriole amplification in multiciliated that can generate more than 100 centrioles. The polypeptide is Serine/threonine-protein kinase PLK4 (Xenopus laevis (African clawed frog)).